The chain runs to 103 residues: Acylphosphatase-2 (103 aa).

At Ser-2 the chain carries N-acetylserine. Positions 13-103 (SVDYEVFGRV…LDFSGFSTRY (91 aa)) constitute an Acylphosphatase-like domain. S-glutathionyl cysteine; alternate is present on Cys-26. Catalysis depends on residues Arg-28 and Asn-46.

This sequence belongs to the acylphosphatase family. In terms of assembly, monomer (TU1) or homodimer (TU3) in absence of reducing factors; disulfide linked.

It catalyses the reaction an acyl phosphate + H2O = a carboxylate + phosphate + H(+). In terms of biological role, its physiological role is not yet clear. The chain is Acylphosphatase-2 (ACYP2) from Meleagris gallopavo (Wild turkey).